The chain runs to 884 residues: Translation initiation factor IF-2 (884 aa).

A disordered region spans residues 93–288 (VNTPEAEQAK…KGKRKPSTLQ (196 aa)). Positions 99-209 (EQAKAEEQAQ…KMAAENEGKW (111 aa)) are enriched in basic and acidic residues. The span at 216 to 229 (QTESADYHVTTSQH) shows a compositional bias: polar residues. Basic and acidic residues predominate over residues 231–246 (RAAEDENDAKVEGDRR). The segment covering 247–261 (SRTRGGKATKQKKGN) has biased composition (basic residues). Residues 262–275 (KLSESKADREEARA) show a composition bias toward basic and acidic residues. Residues 383 to 552 (HRAPVVTIMG…LLQAEVLELK (170 aa)) enclose the tr-type G domain. Residues 392–399 (GHVDHGKT) form a G1 region. 392–399 (GHVDHGKT) provides a ligand contact to GTP. The G2 stretch occupies residues 417–421 (GITQH). The tract at residues 438–441 (DTPG) is G3. GTP is bound by residues 438-442 (DTPGH) and 492-495 (NKID). The interval 492–495 (NKID) is G4. The segment at 528 to 530 (SAK) is G5.

Belongs to the TRAFAC class translation factor GTPase superfamily. Classic translation factor GTPase family. IF-2 subfamily.

The protein resides in the cytoplasm. Functionally, one of the essential components for the initiation of protein synthesis. Protects formylmethionyl-tRNA from spontaneous hydrolysis and promotes its binding to the 30S ribosomal subunits. Also involved in the hydrolysis of GTP during the formation of the 70S ribosomal complex. The sequence is that of Translation initiation factor IF-2 from Yersinia pestis bv. Antiqua (strain Angola).